Consider the following 178-residue polypeptide: Cytidylate kinase (178 aa).

7–15 (GLPGTGTTT) provides a ligand contact to ATP.

The protein belongs to the cytidylate kinase family. Type 2 subfamily.

It localises to the cytoplasm. The catalysed reaction is CMP + ATP = CDP + ADP. The enzyme catalyses dCMP + ATP = dCDP + ADP. This is Cytidylate kinase from Methanococcus aeolicus (strain ATCC BAA-1280 / DSM 17508 / OCM 812 / Nankai-3).